A 150-amino-acid polypeptide reads, in one-letter code: Large ribosomal subunit protein uL13 (150 aa).

Belongs to the universal ribosomal protein uL13 family. Part of the 50S ribosomal subunit.

This protein is one of the early assembly proteins of the 50S ribosomal subunit, although it is not seen to bind rRNA by itself. It is important during the early stages of 50S assembly. The sequence is that of Large ribosomal subunit protein uL13 from Mesoplasma florum (strain ATCC 33453 / NBRC 100688 / NCTC 11704 / L1) (Acholeplasma florum).